The chain runs to 66 residues: Phylloseptin-Az2 (66 aa).

The N-terminal stretch at 1–22 (MAFLKKSLFLVLFLGLVSLSIC) is a signal peptide. Residues 23–44 (EEEKRETEEKENEQEDDDKSEE) constitute a propeptide that is removed on maturation. The segment at 24–45 (EEKRETEEKENEQEDDDKSEEK) is disordered. The segment covering 31–41 (EKENEQEDDDK) has biased composition (acidic residues). Phe65 is modified (phenylalanine amide).

In terms of tissue distribution, expressed by the skin glands.

It localises to the secreted. Its function is as follows. Has antibacterial activity against the Gram-negative bacteria E.coli ATCC 11775 (MIC=7.2 uM), and the Gram-positive bacteria S.aureus ATCC 12600 (MIC=3.6 uM) and M.luteus ATCC 49732 (MIC=1.8 uM). Does not inhibit the growth of the fungus C.albicans. In Pithecopus azureus (Orange-legged monkey tree frog), this protein is Phylloseptin-Az2.